The sequence spans 70 residues: DNA gyrase inhibitor YacG (70 aa).

Zn(2+) is bound by residues C9, C12, C28, and C32. The tract at residues 44-70 (SRKIPGSSIDPESIVTTNNKQDNVDEQ) is disordered.

Belongs to the DNA gyrase inhibitor YacG family. Interacts with GyrB. Zn(2+) is required as a cofactor.

In terms of biological role, inhibits all the catalytic activities of DNA gyrase by preventing its interaction with DNA. Acts by binding directly to the C-terminal domain of GyrB, which probably disrupts DNA binding by the gyrase. This chain is DNA gyrase inhibitor YacG, found in Legionella pneumophila subsp. pneumophila (strain Philadelphia 1 / ATCC 33152 / DSM 7513).